Consider the following 272-residue polypeptide: Biglycan (272 aa).

The N-terminal stretch at 1-16 (MWPLWLLASLLALSQA) is a signal peptide. Positions 17-37 (LPFEQKAFWDFTLDDGLPMLN) are excised as a propeptide. 2 O-linked (Xyl...) (glycosaminoglycan) serine glycosylation sites follow: S42 and S48. The LRRNT domain occupies 55–91 (ALPPTFSAMCPFGCHCHLRVVQCSDLGLKAVPKEISP). 2 cysteine pairs are disulfide-bonded: C64–C70 and C68–C77. 8 LRR repeats span residues 92-113 (DTTL…DFKG), 116-137 (HLYA…PSAP), 138-161 (DGLK…DLPE), 162-183 (TLNE…DLLR), 186-209 (KLYR…SFLP), 210-232 (TLRE…PDLK), 233-254 (LLQV…DFCP), and 255-272 (VGFG…LFNN).

This sequence belongs to the small leucine-rich proteoglycan (SLRP) family. SLRP class I subfamily. Homodimer. Forms a ternary complex with MFAP2 and ELN. Post-translationally, the two attached glycosaminoglycan chains can be either chondroitin sulfate or dermatan sulfate. As to expression, found in several connective tissues, especially in articular cartilages.

The protein localises to the secreted. It localises to the extracellular space. Its subcellular location is the extracellular matrix. Functionally, may be involved in collagen fiber assembly. This Sus scrofa (Pig) protein is Biglycan (BGN).